The chain runs to 1419 residues: DNA-directed RNA polymerase subunit beta' (1419 aa).

The Zn(2+) site is built by C71, C73, C86, and C89. Mg(2+) is bound by residues D461, D463, and D465. Zn(2+) contacts are provided by C815, C889, C896, and C899.

Belongs to the RNA polymerase beta' chain family. The RNAP catalytic core consists of 2 alpha, 1 beta, 1 beta' and 1 omega subunit. When a sigma factor is associated with the core the holoenzyme is formed, which can initiate transcription. It depends on Mg(2+) as a cofactor. Zn(2+) is required as a cofactor.

It catalyses the reaction RNA(n) + a ribonucleoside 5'-triphosphate = RNA(n+1) + diphosphate. In terms of biological role, DNA-dependent RNA polymerase catalyzes the transcription of DNA into RNA using the four ribonucleoside triphosphates as substrates. In Actinobacillus succinogenes (strain ATCC 55618 / DSM 22257 / CCUG 43843 / 130Z), this protein is DNA-directed RNA polymerase subunit beta'.